The following is a 653-amino-acid chain: Sulfate transporter 1.2 (653 aa).

The disordered stretch occupies residues 1-30; it reads MSSRAHPVDGSPATDGGHVPMKPSPTRHKV. Residues 1–91 lie on the Cytoplasmic side of the membrane; that stretch reads MSSRAHPVDG…GRNYTFKKFR (91 aa). A helical transmembrane segment spans residues 92–112; the sequence is GDLISGLTIASLCIPQDIGYA. Topologically, residues 113–116 are extracellular; the sequence is KLAN. A helical membrane pass occupies residues 117–137; that stretch reads LDPKYGLYSSFVPPLVYACMG. At 138–141 the chain is on the cytoplasmic side; that stretch reads SSRD. The helical transmembrane segment at 142–162 threads the bilayer; it reads IAIGPVAVVSLLLGTLLRAEI. Topologically, residues 163–173 are extracellular; that stretch reads DPNTSPDEYLR. 2 consecutive transmembrane segments (helical) span residues 174–194 and 195–215; these read LAFT…FFRL and GFLI…GAAI. The Extracellular segment spans residues 216–253; sequence TIALQQLKGFLGIKKFTKKTDIISVLESVFKAAHHGWN. The chain crosses the membrane as a helical span at residues 254–274; the sequence is WQTILIGASFLTFLLTSKIIG. At 275-280 the chain is on the cytoplasmic side; that stretch reads KKSKKL. The helical transmembrane segment at 281 to 301 threads the bilayer; sequence FWVPAIAPLISVIVSTFFVYI. Topologically, residues 302–339 are extracellular; that stretch reads TRADKQGVQIVKHLDQGINPSSFHLIYFTGDNLAKGIR. The helical transmembrane segment at 340 to 360 threads the bilayer; the sequence is IGVVAGMVALTEAVAIGRTFA. Residues 361-372 are Cytoplasmic-facing; that stretch reads AMKDYQIDGNKE. Residues 373–393 traverse the membrane as a helical segment; sequence MVALGMMNVVGSMSSCYVATG. The Extracellular portion of the chain corresponds to 394–409; sequence SFSRSAVNFMAGCQTA. A helical membrane pass occupies residues 410 to 430; that stretch reads VSNIIMSIVVLLTLLFLTPLF. Residues 431–438 are Cytoplasmic-facing; sequence KYTPNAIL. The chain crosses the membrane as a helical span at residues 439 to 459; sequence AAIIINAVIPLIDIQAAILIF. Residues 460–466 are Extracellular-facing; it reads KVDKLDF. The helical transmembrane segment at 467-487 threads the bilayer; it reads IACIGAFFGVIFVSVEIGLLI. Residues 488-653 lie on the Cytoplasmic side of the membrane; sequence AVSISFAKIL…ACCPKLSNEV (166 aa). The 124-residue stretch at 522–645 folds into the STAS domain; the sequence is QYPEATMVPG…LTVADAVEAC (124 aa).

The protein belongs to the SLC26A/SulP transporter (TC 2.A.53.1) family. As to quaternary structure, homodimer. Interacts with OASA1 through its STAS domain. Expressed in lateral root cap, root hairs, epidermal and cortical cells of roots.

The protein resides in the cell membrane. Interaction with OASA1 negatively impacts the transporter activity. In terms of biological role, high-affinity H(+)/sulfate cotransporter that mediates the uptake of the environmental sulfate by plant roots. Plays a central role in the regulation of sulfate assimilation. Unable to transport molybdate. The sequence is that of Sulfate transporter 1.2 (SULTR1;2) from Arabidopsis thaliana (Mouse-ear cress).